The following is a 412-amino-acid chain: Adenylosuccinate synthetase (412 aa).

GTP-binding positions include Gly12–Lys18 and Gly40–Glu42. Asp13 acts as the Proton acceptor in catalysis. Residues Asp13 and Gly40 each contribute to the Mg(2+) site. IMP contacts are provided by residues Asp13–Lys16, Asn38–His41, Arg134, Asn212, Thr227, and Arg291. Catalysis depends on His41, which acts as the Proton donor. Thr287 to Arg293 lines the substrate pocket. GTP contacts are provided by residues Arg293, Lys318–Asp320, and Gly400–Gly402.

This sequence belongs to the adenylosuccinate synthetase family. Homodimer. It depends on Mg(2+) as a cofactor.

The protein resides in the cytoplasm. The catalysed reaction is IMP + L-aspartate + GTP = N(6)-(1,2-dicarboxyethyl)-AMP + GDP + phosphate + 2 H(+). Its pathway is purine metabolism; AMP biosynthesis via de novo pathway; AMP from IMP: step 1/2. In terms of biological role, plays an important role in the de novo pathway and in the salvage pathway of purine nucleotide biosynthesis. Catalyzes the first committed step in the biosynthesis of AMP from IMP. This Fusarium vanettenii (strain ATCC MYA-4622 / CBS 123669 / FGSC 9596 / NRRL 45880 / 77-13-4) (Fusarium solani subsp. pisi) protein is Adenylosuccinate synthetase.